Here is a 230-residue protein sequence, read N- to C-terminus: Demethylmenaquinone methyltransferase (230 aa).

Residues Thr-62, Asp-80, 100-101, and Ser-117 contribute to the S-adenosyl-L-methionine site; that span reads DA.

This sequence belongs to the class I-like SAM-binding methyltransferase superfamily. MenG/UbiE family.

It catalyses the reaction a 2-demethylmenaquinol + S-adenosyl-L-methionine = a menaquinol + S-adenosyl-L-homocysteine + H(+). Its pathway is quinol/quinone metabolism; menaquinone biosynthesis; menaquinol from 1,4-dihydroxy-2-naphthoate: step 2/2. Methyltransferase required for the conversion of demethylmenaquinol (DMKH2) to menaquinol (MKH2). This chain is Demethylmenaquinone methyltransferase, found in Mycobacterium sp. (strain KMS).